We begin with the raw amino-acid sequence, 482 residues long: Lipoamide acyltransferase component of branched-chain alpha-keto acid dehydrogenase complex, mitochondrial (482 aa).

The transit peptide at 1-61 (MAAARVLRTW…HSLRTAAVLQ (61 aa)) directs the protein to the mitochondrion. A Lipoyl-binding domain is found at 64–139 (VVQFKLSDIG…YVGKPLIDIE (76 aa)). At K105 the chain carries N6-lipoyllysine. K133 carries the N6-succinyllysine modification. The interval 145-160 (DSEEDVVETPAVSHDE) is critical for association with PPM1K. The region spanning 172 to 209 (LATPAVRRLAMENNIKLSEVVGSGKDGRILKEDILSFL) is the Peripheral subunit-binding (PSBD) domain. Residue K196 is modified to N6-acetyllysine; alternate. Residue K196 is modified to N6-succinyllysine; alternate. K202 carries the post-translational modification N6-acetyllysine. Residues 217-252 (LPPSPKSEITPPPPQPKDRTFPTPIAKPPVFTGKDR) form a disordered region. The segment covering 218–231 (PPSPKSEITPPPPQ) has biased composition (pro residues). S220 bears the Phosphoserine mark. 2 positions are modified to N6-acetyllysine: K243 and K250. At K261 the chain carries N6-succinyllysine. The residue at position 289 (K289) is an N6-acetyllysine; alternate. K289 is modified (N6-succinyllysine; alternate). CoA is bound at residue R291. N6-acetyllysine occurs at positions 295 and 304. CoA-binding residues include S306, D349, Q378, S399, N400, S403, G424, and I426. An N6-acetyllysine modification is found at K435. At K440 the chain carries N6-acetyllysine; alternate. Residue K440 is modified to N6-succinyllysine; alternate. Active-site residues include H452 and D456.

It belongs to the 2-oxoacid dehydrogenase family. As to quaternary structure, forms a 24-polypeptide structural core with octahedral symmetry that represents the E2 component of the branched-chain alpha-ketoacid dehydrogenase (BCKDH) complex. The BCKDH complex is composed of three major building blocks E1, E2 and E3. It is organized around E2, a 24-meric cubic core composed of DBT, to which are associated 6 to 12 copies of E1, and approximately 6 copies of the dehydrogenase E3, a DLD dimer. Interacts with PPM1K with a 24:1 stoichiometry; the N-terminal region (residues 49-61) of PPM1K and C-terminal linker of the lipoyl domain of DBT/E2 (residues 145-160) are critical for this interaction whereas the lipoyl prosthetic group is dispensable. This interaction requires colocalization in mitochondria. PPM1K competes with BCKDK for binding to DBT; this interaction is modulated by branched-chain alpha-keto acids (BCKAs). At steady state, BCKDH holoenzyme preferentially binds BCKDK and BCKDHA is phosphorylated. In response to high levels of BCKAs, BCKDK is replaced by PPM1K leading to BCKDHA dephosphorylation. Requires (R)-lipoate as cofactor.

It localises to the mitochondrion matrix. The catalysed reaction is N(6)-[(R)-dihydrolipoyl]-L-lysyl-[protein] + 2-methylpropanoyl-CoA = N(6)-[(R)-S(8)-2-methylpropanoyldihydrolipoyl]-L-lysyl-[protein] + CoA. Functionally, the branched-chain alpha-keto dehydrogenase complex catalyzes the overall conversion of alpha-keto acids to acyl-CoA and CO(2). It contains multiple copies of three enzymatic components: branched-chain alpha-keto acid decarboxylase (E1), lipoamide acyltransferase (E2) and lipoamide dehydrogenase (E3). Within this complex, the catalytic function of this enzyme is to accept, and to transfer to coenzyme A, acyl groups that are generated by the branched-chain alpha-keto acid decarboxylase component. This Mus musculus (Mouse) protein is Lipoamide acyltransferase component of branched-chain alpha-keto acid dehydrogenase complex, mitochondrial (Dbt).